The primary structure comprises 328 residues: MTPELLTTLLITGGGLIALAVFFTFVPVGLWISSFAAGVHVSIFTLIGMRLRRVIPSKIVNPLIKAVKAGIELNTNQLESHFLAGGNVDRVVNALIAAHRANIELSFERAAAIDLAGRNVLEAVQMSVNPKVIETPFIAGVAMDGIEVKAKARITVRANIDRLVGGAGEETIIARVGEGVVSTIGSQNNHKHVLENPDMISRTVLTKGLDSGTAFEILSIDIADIDIGKNIGAVLQTDQAEADKKIAQAKAEERRAMAIAREQEMKSSVEEMRAKVVGAEAEVPLAMAEALRNGKLGVMDYVNYLNVQADTEMRKAIGAPVDSESDNE.

2 helical membrane-spanning segments follow: residues 9–29 and 30–50; these read LLIT…VPVG and LWIS…IGMR.

This sequence belongs to the flotillin-like FloA family. As to quaternary structure, homooligomerizes.

It is found in the cell membrane. Its subcellular location is the membrane raft. Found in functional membrane microdomains (FMM) that may be equivalent to eukaryotic membrane rafts. FMMs are highly dynamic and increase in number as cells age. Flotillins are thought to be important factors in membrane fluidity. This Exiguobacterium sp. (strain ATCC BAA-1283 / AT1b) protein is Flotillin-like protein FloA.